Consider the following 235-residue polypeptide: Ubiquinone/menaquinone biosynthesis C-methyltransferase UbiE (235 aa).

S-adenosyl-L-methionine contacts are provided by threonine 60 and aspartate 81.

The protein belongs to the class I-like SAM-binding methyltransferase superfamily. MenG/UbiE family.

The catalysed reaction is a 2-demethylmenaquinol + S-adenosyl-L-methionine = a menaquinol + S-adenosyl-L-homocysteine + H(+). It carries out the reaction a 2-methoxy-6-(all-trans-polyprenyl)benzene-1,4-diol + S-adenosyl-L-methionine = a 5-methoxy-2-methyl-3-(all-trans-polyprenyl)benzene-1,4-diol + S-adenosyl-L-homocysteine + H(+). Its pathway is quinol/quinone metabolism; menaquinone biosynthesis; menaquinol from 1,4-dihydroxy-2-naphthoate: step 2/2. It participates in cofactor biosynthesis; ubiquinone biosynthesis. Functionally, methyltransferase required for the conversion of demethylmenaquinol (DMKH2) to menaquinol (MKH2) and the conversion of 2-polyprenyl-6-methoxy-1,4-benzoquinol (DDMQH2) to 2-polyprenyl-3-methyl-6-methoxy-1,4-benzoquinol (DMQH2). In Geotalea uraniireducens (strain Rf4) (Geobacter uraniireducens), this protein is Ubiquinone/menaquinone biosynthesis C-methyltransferase UbiE.